Reading from the N-terminus, the 397-residue chain is MTTLLNPYFGEFGGMYVPQILMPALNQLEEAFVSAQKDPEFQAQFADLLKNYAGRPTALTKCQNITAGTRTTLYLKREDLLHGGAHKTNQVLGQALLAKRMGKSEIIAETGAGQHGVASALASALLGLKCRIYMGAKDVERQSPNVFRMRLMGAEVIPVHSGSATLKDACNEALRDWSGSYETAHYMLGTAAGPHPYPTIVREFQRMIGEETKAQILDKEGRLPDAVIACVGGGSNAIGMFADFINDTSVGLIGVEPGGHGIETGKHGAPLKHGRVGIYFGMKAPMMQTADGQIEESYSISAGLDFPSVGPQHAYLNSIGRADYVSITDDEALEAFKTLCRHEGIIPALESSHALAHALKMMREQPEKEQLLVVNLSGRGDKDIFTVHDILKARGEI.

Lys87 carries the post-translational modification N6-(pyridoxal phosphate)lysine.

It belongs to the TrpB family. In terms of assembly, tetramer of two alpha and two beta chains. Pyridoxal 5'-phosphate serves as cofactor.

It catalyses the reaction (1S,2R)-1-C-(indol-3-yl)glycerol 3-phosphate + L-serine = D-glyceraldehyde 3-phosphate + L-tryptophan + H2O. It participates in amino-acid biosynthesis; L-tryptophan biosynthesis; L-tryptophan from chorismate: step 5/5. In terms of biological role, the beta subunit is responsible for the synthesis of L-tryptophan from indole and L-serine. This chain is Tryptophan synthase beta chain, found in Salmonella choleraesuis (strain SC-B67).